The primary structure comprises 299 residues: Acetylglutamate kinase (299 aa).

Residues 70–71, Arg-92, and Asn-186 contribute to the substrate site; that span reads GG.

It belongs to the acetylglutamate kinase family. ArgB subfamily.

It localises to the cytoplasm. It carries out the reaction N-acetyl-L-glutamate + ATP = N-acetyl-L-glutamyl 5-phosphate + ADP. It participates in amino-acid biosynthesis; L-arginine biosynthesis; N(2)-acetyl-L-ornithine from L-glutamate: step 2/4. Catalyzes the ATP-dependent phosphorylation of N-acetyl-L-glutamate. The chain is Acetylglutamate kinase from Thermoanaerobacter pseudethanolicus (strain ATCC 33223 / 39E) (Clostridium thermohydrosulfuricum).